Here is a 241-residue protein sequence, read N- to C-terminus: Tetraspanin-1 (241 aa).

Topologically, residues 1 to 11 (MQCFSFIKTMM) are cytoplasmic. The helical transmembrane segment at 12 to 34 (ILFNLLIFLCGAALLAVGIWVSI) threads the bilayer. At 35-53 (DGASFLKIFGPLSSSAMQF) the chain is on the extracellular side. A helical membrane pass occupies residues 54–76 (VNVGYFLIAAGVVVFALGFLGCY). Residues 77–88 (GAKTESKCALMT) lie on the Cytoplasmic side of the membrane. A helical transmembrane segment spans residues 89-111 (FFFILLLIFIAEVAAAVVALVYT). Over 112-214 (TMAEHFLTLL…LYDIRTNAVT (103 aa)) the chain is Extracellular. Residues asparagine 141, asparagine 154, asparagine 178, and asparagine 184 are each glycosylated (N-linked (GlcNAc...) asparagine). The chain crosses the membrane as a helical span at residues 215 to 237 (VGGVAAGIGGLELAAMIVSMYLY). The Cytoplasmic portion of the chain corresponds to 238 to 241 (CNLQ).

The protein belongs to the tetraspanin (TM4SF) family. In terms of assembly, interacts with SLC19A2. Interacts with NTRK1/TRKA.

It is found in the lysosome membrane. Its function is as follows. Structural component of specialized membrane microdomains known as tetraspanin-enriched microdomains (TERMs), which act as platforms for receptor clustering and signaling. Participates thereby in diverse biological functions such as cell signal transduction, adhesion, migration and protein trafficking. Regulates neuronal differentiation in response to NGF by facilitating NGF-mediated activation of NTRK1/TRKA receptor tyrosine kinase and subsequent downstream signaling pathways. Plays a role in the inhibition of TNFalpha-induced apoptosis. Mechanistically, inhibits the NF-kappa-B signaling pathway by blocking phosphorylation of CHUK. Also promotes the stability of the thiamine transporter 1/SLC19A2 in intestinal epithelial cells leading to an increase of thiamine uptake process. This is Tetraspanin-1 (TSPAN1) from Pongo abelii (Sumatran orangutan).